The chain runs to 185 residues: TATA-box-binding protein (185 aa).

2 repeat units span residues 8–84 (IENI…VEML) and 99–175 (IQNM…LHEL).

Belongs to the TBP family.

Functionally, general factor that plays a role in the activation of archaeal genes transcribed by RNA polymerase. Binds specifically to the TATA box promoter element which lies close to the position of transcription initiation. In Thermococcus sibiricus (strain DSM 12597 / MM 739), this protein is TATA-box-binding protein.